Reading from the N-terminus, the 355-residue chain is UDP-N-acetylglucosamine--N-acetylmuramyl-(pentapeptide) pyrophosphoryl-undecaprenol N-acetylglucosamine transferase (355 aa).

UDP-N-acetyl-alpha-D-glucosamine is bound by residues 15-17, asparagine 127, arginine 163, serine 191, isoleucine 244, 263-268, and glutamine 288; these read TGG and ALTVSE.

Belongs to the glycosyltransferase 28 family. MurG subfamily.

The protein resides in the cell inner membrane. The enzyme catalyses di-trans,octa-cis-undecaprenyl diphospho-N-acetyl-alpha-D-muramoyl-L-alanyl-D-glutamyl-meso-2,6-diaminopimeloyl-D-alanyl-D-alanine + UDP-N-acetyl-alpha-D-glucosamine = di-trans,octa-cis-undecaprenyl diphospho-[N-acetyl-alpha-D-glucosaminyl-(1-&gt;4)]-N-acetyl-alpha-D-muramoyl-L-alanyl-D-glutamyl-meso-2,6-diaminopimeloyl-D-alanyl-D-alanine + UDP + H(+). It participates in cell wall biogenesis; peptidoglycan biosynthesis. Functionally, cell wall formation. Catalyzes the transfer of a GlcNAc subunit on undecaprenyl-pyrophosphoryl-MurNAc-pentapeptide (lipid intermediate I) to form undecaprenyl-pyrophosphoryl-MurNAc-(pentapeptide)GlcNAc (lipid intermediate II). This chain is UDP-N-acetylglucosamine--N-acetylmuramyl-(pentapeptide) pyrophosphoryl-undecaprenol N-acetylglucosamine transferase, found in Escherichia coli O9:H4 (strain HS).